The following is a 715-amino-acid chain: MSHRYSENNNFPYDNNQMVLDMILCSLVGVPQPISWDSVARLVPGYTPKECAKRFEELKSSGTSPVDNQYNPLMATGGIPLESLASYIKSSLLDPVDDQEDVTVGQGTISIIGRPGATTARKCSESDRCSSSLKGDSTTGSQGPNMVIHVCDEAKNLKEDFVCPRDLLVSEMKYFAEYLSTDAQRCEEVDISVHCDVHIFDWLMRYVKRSAPENENQEIPKLEPGNVISILISSEFLKMESLVEECIRYCHKNMSAIVATPCNMNCINANLLTRIANLFTHNEADDVKDKKDKFKSKIFCKKIERLFDAECKNADSPANASTLFRCCLCKRLLTKEAEKKIDCLPGRISIDQHGNIVYLHIRDKSWDVHEYLISLFEELKSWRDVYWRLWGTINWLTCSRCKQSFLCNESSHCQYHPEPAVYPGAASSLDSPGTGIYPCCNQKVLRFDPAQLPKGCKVRDHVVGLPGGGDNMSENPSCNFLSDLLQRRDVIAVPFSKDLNGDSGIVLSEEPSFKCDALLEPNTLYGQKTGEMNAFLSLKNISLQLKQQSLLSEEEDYTTGSEVTEDEVGDEEELSRKQAGRKVKPKRSAKQTKKHISSPSIHKKERQQEKASRDSSPFTVSLQRNKWDASRSLRFNQDAQREDDQRRMTEITGHLIKIRLGDLERVKAKEGKEQAGGIYARLEAQIKASAHSNTRQMNTEKIPRPKPRFGTGRPT.

The 39-residue stretch at 21–59 (DMILCSLVGVPQPISWDSVARLVPGYTPKECAKRFEELK) folds into the SANT domain. One can recognise a BTB domain in the interval 146–254 (MVIHVCDEAK…ECIRYCHKNM (109 aa)). Residues 552–573 (SEEEDYTTGSEVTEDEVGDEEE) are compositionally biased toward acidic residues. Disordered regions lie at residues 552 to 623 (SEEE…VSLQ) and 689 to 715 (SAHSNTRQMNTEKIPRPKPRFGTGRPT). Over residues 578–605 (QAGRKVKPKRSAKQTKKHISSPSIHKKE) the composition is skewed to basic residues. Composition is skewed to polar residues over residues 614 to 623 (DSSPFTVSLQ) and 690 to 699 (AHSNTRQMNT).

Belongs to the KIAA1841 family. As to quaternary structure, homodimer.

Functionally, negatively regulates class switch recombination or isotype switching in splenic B-cells. The chain is SANT and BTB domain regulator of class switch recombination from Xenopus laevis (African clawed frog).